We begin with the raw amino-acid sequence, 990 residues long: Bifunctional glutamine synthetase adenylyltransferase/adenylyl-removing enzyme (990 aa).

The interval 1–474 (MPTDNENSMT…HFNELVEESQ (474 aa)) is adenylyl removase. Residues 484 to 990 (FIACQDAWRL…WDTLFGTCSE (507 aa)) form an adenylyl transferase region.

This sequence belongs to the GlnE family. It depends on Mg(2+) as a cofactor.

It carries out the reaction [glutamine synthetase]-O(4)-(5'-adenylyl)-L-tyrosine + phosphate = [glutamine synthetase]-L-tyrosine + ADP. The enzyme catalyses [glutamine synthetase]-L-tyrosine + ATP = [glutamine synthetase]-O(4)-(5'-adenylyl)-L-tyrosine + diphosphate. In terms of biological role, involved in the regulation of glutamine synthetase GlnA, a key enzyme in the process to assimilate ammonia. When cellular nitrogen levels are high, the C-terminal adenylyl transferase (AT) inactivates GlnA by covalent transfer of an adenylyl group from ATP to specific tyrosine residue of GlnA, thus reducing its activity. Conversely, when nitrogen levels are low, the N-terminal adenylyl removase (AR) activates GlnA by removing the adenylyl group by phosphorolysis, increasing its activity. The regulatory region of GlnE binds the signal transduction protein PII (GlnB) which indicates the nitrogen status of the cell. This Alteromonas mediterranea (strain DSM 17117 / CIP 110805 / LMG 28347 / Deep ecotype) protein is Bifunctional glutamine synthetase adenylyltransferase/adenylyl-removing enzyme.